The following is a 284-amino-acid chain: 2-dehydro-3-deoxyphosphooctonate aldolase (284 aa).

It belongs to the KdsA family.

The protein localises to the cytoplasm. It catalyses the reaction D-arabinose 5-phosphate + phosphoenolpyruvate + H2O = 3-deoxy-alpha-D-manno-2-octulosonate-8-phosphate + phosphate. The protein operates within carbohydrate biosynthesis; 3-deoxy-D-manno-octulosonate biosynthesis; 3-deoxy-D-manno-octulosonate from D-ribulose 5-phosphate: step 2/3. Its pathway is bacterial outer membrane biogenesis; lipopolysaccharide biosynthesis. This chain is 2-dehydro-3-deoxyphosphooctonate aldolase, found in Mannheimia succiniciproducens (strain KCTC 0769BP / MBEL55E).